The chain runs to 612 residues: Glutamine--fructose-6-phosphate aminotransferase [isomerizing] (612 aa).

Cysteine 2 (nucleophile; for GATase activity) is an active-site residue. Residues 2–221 (CGIVGIVSQR…NGDIAEITNS (220 aa)) enclose the Glutamine amidotransferase type-2 domain. SIS domains lie at 289–429 (FNKT…IRKI) and 461–602 (LVKN…VDHP). Lysine 607 acts as the For Fru-6P isomerization activity in catalysis.

In terms of assembly, homodimer.

The protein localises to the cytoplasm. It carries out the reaction D-fructose 6-phosphate + L-glutamine = D-glucosamine 6-phosphate + L-glutamate. Its function is as follows. Catalyzes the first step in hexosamine metabolism, converting fructose-6P into glucosamine-6P using glutamine as a nitrogen source. This Wigglesworthia glossinidia brevipalpis protein is Glutamine--fructose-6-phosphate aminotransferase [isomerizing].